A 174-amino-acid polypeptide reads, in one-letter code: Granulocyte colony-stimulating factor (174 aa).

2 disulfide bridges follow: C36–C42 and C64–C74. O-linked (GalNAc...) threonine glycosylation is present at T133.

The protein belongs to the IL-6 superfamily. In terms of assembly, monomer. Post-translationally, O-glycosylated.

It is found in the secreted. Functionally, granulocyte/macrophage colony-stimulating factors are cytokines that act in hematopoiesis by controlling the production, differentiation, and function of 2 related white cell populations of the blood, the granulocytes and the monocytes-macrophages. This CSF induces granulocytes. The protein is Granulocyte colony-stimulating factor (CSF3) of Ovis aries (Sheep).